The following is a 490-amino-acid chain: Costunolide synthase (490 aa).

A helical; Signal-anchor for type II membrane protein transmembrane segment spans residues P3–S23. Residues N167 and N255 are each glycosylated (N-linked (GlcNAc...) asparagine). A heme-binding site is contributed by C432.

This sequence belongs to the cytochrome P450 family. Heme serves as cofactor.

It is found in the membrane. The enzyme catalyses germacra-1(10),4,11(13)-trien-12-oate + reduced [NADPH--hemoprotein reductase] + O2 = (+)-costunolide + oxidized [NADPH--hemoprotein reductase] + 2 H2O. Its pathway is secondary metabolite biosynthesis; terpenoid biosynthesis. Functionally, involved in the biosynthesis of germacrene-derived sesquiterpene lactones. Component of the parthenolide biosynthetic pathway; parthenolide and conjugates are promising anti-cancer drugs highly active against colon cancer cells. Hydroxylates germacrene A acid to 6-alpha-hydroxy-germacrne A acid, a precursor of sesquiterpene lactones that spontaneously undergoes a lactonization which yields costunolide. The chain is Costunolide synthase from Lactuca sativa (Garden lettuce).